We begin with the raw amino-acid sequence, 910 residues long: ZZ-type zinc finger-containing protein 3 (910 aa).

Disordered stretches follow at residues 41 to 117 and 133 to 153; these read AHPE…RQAE and EATN…PGEH. A compositionally biased stretch (polar residues) spans 67 to 84; sequence QKGTNNGRTSDVRQQSAR. Residues S89, S96, S137, S138, and S142 each carry the phosphoserine modification. Over residues 96-116 the composition is skewed to basic and acidic residues; the sequence is SSSEKDDLERQALESCERRQA. Over residues 142 to 153 the composition is skewed to basic and acidic residues; that stretch reads SPVKPDKEPGEH. K283 participates in a covalent cross-link: Glycyl lysine isopeptide (Lys-Gly) (interchain with G-Cter in SUMO2). 3 disordered regions span residues 303 to 358, 373 to 444, and 609 to 641; these read TAES…VSGE, TSLS…PQDG, and ARPK…SHNR. 2 stretches are compositionally biased toward polar residues: residues 331 to 347 and 397 to 434; these read SSAS…NPLD and SSPT…SESP. K401 carries the N6-acetyllysine modification. S613 carries the post-translational modification Phosphoserine. Residues 613–622 show a composition bias toward basic and acidic residues; that stretch reads SPLDPKKDGE. Residue K654 forms a Glycyl lysine isopeptide (Lys-Gly) (interchain with G-Cter in SUMO2) linkage. In terms of domain architecture, HTH myb-type spans 654–714; the sequence is KPETFNQLWT…RVQKYFIKLT (61 aa). The segment at residues 687 to 710 is a DNA-binding region (H-T-H motif); the sequence is WQKIADELGNRTAKQVASRVQKYF. N6-acetyllysine is present on K708. K715 is covalently cross-linked (Glycyl lysine isopeptide (Lys-Gly) (interchain with G-Cter in SUMO2)). The segment at 825 to 884 adopts a ZZ-type zinc-finger fold; that stretch reads HVGFKCDNCGVEPIQGVRWHCQDCPPEMSLDFCDSCSDCPHETDIHKEDHQLEPVYKSET. Residues C830, C833, C845, C848, C857, C860, H870, and H874 each contribute to the Zn(2+) site.

As to quaternary structure, component of the ADA2A-containing complex (ATAC), composed of KAT14, KAT2A, TADA2L, TADA3L, ZZ3, MBIP, WDR5, YEATS2, CCDC101 and DR1. Interacts via (ZZ-type zinc finger) with histone H3 in a methylation-independent manner and acetylation on 'Lys-4' (H3K4ac) moderately enhances the interaction.

It is found in the nucleus. Histone H3 reader that is required for the ATAC complex-mediated maintenance of histone acetylation and gene activation. Component of the ATAC complex, a complex with histone acetyltransferase activity on histones H3 and H4. The polypeptide is ZZ-type zinc finger-containing protein 3 (Zzz3) (Mus musculus (Mouse)).